A 289-amino-acid chain; its full sequence is Acetyl-coenzyme A carboxylase carboxyl transferase subunit beta (289 aa).

Residues 28–289 (VMTKCPKCKK…QGGEMAVWQS (262 aa)) form the CoA carboxyltransferase N-terminal domain. Residues C32, C35, C51, and C54 each coordinate Zn(2+). Residues 32–54 (CPKCKKIMYTKELLKNLKVCVNC) form a C4-type zinc finger.

It belongs to the AccD/PCCB family. As to quaternary structure, acetyl-CoA carboxylase is a heterohexamer composed of biotin carboxyl carrier protein (AccB), biotin carboxylase (AccC) and two subunits each of ACCase subunit alpha (AccA) and ACCase subunit beta (AccD). Requires Zn(2+) as cofactor.

It localises to the cytoplasm. The enzyme catalyses N(6)-carboxybiotinyl-L-lysyl-[protein] + acetyl-CoA = N(6)-biotinyl-L-lysyl-[protein] + malonyl-CoA. It functions in the pathway lipid metabolism; malonyl-CoA biosynthesis; malonyl-CoA from acetyl-CoA: step 1/1. Functionally, component of the acetyl coenzyme A carboxylase (ACC) complex. Biotin carboxylase (BC) catalyzes the carboxylation of biotin on its carrier protein (BCCP) and then the CO(2) group is transferred by the transcarboxylase to acetyl-CoA to form malonyl-CoA. In Bacillus cereus (strain AH187), this protein is Acetyl-coenzyme A carboxylase carboxyl transferase subunit beta.